The chain runs to 235 residues: Large ribosomal subunit protein uL1 (235 aa).

It belongs to the universal ribosomal protein uL1 family. As to quaternary structure, part of the 50S ribosomal subunit.

In terms of biological role, binds directly to 23S rRNA. The L1 stalk is quite mobile in the ribosome, and is involved in E site tRNA release. Functionally, protein L1 is also a translational repressor protein, it controls the translation of the L11 operon by binding to its mRNA. This Prochlorococcus marinus (strain AS9601) protein is Large ribosomal subunit protein uL1.